The primary structure comprises 526 residues: Peptide chain release factor 3 (526 aa).

Residues 9–277 form the tr-type G domain; that stretch reads DKRRTFAIIS…GIVEWAPKPQ (269 aa). GTP-binding positions include 18–25, 86–90, and 140–143; these read SHPDAGKT, DTPGH, and NKLD.

It belongs to the TRAFAC class translation factor GTPase superfamily. Classic translation factor GTPase family. PrfC subfamily.

It is found in the cytoplasm. Increases the formation of ribosomal termination complexes and stimulates activities of RF-1 and RF-2. It binds guanine nucleotides and has strong preference for UGA stop codons. It may interact directly with the ribosome. The stimulation of RF-1 and RF-2 is significantly reduced by GTP and GDP, but not by GMP. This Shewanella woodyi (strain ATCC 51908 / MS32) protein is Peptide chain release factor 3.